A 723-amino-acid chain; its full sequence is Preterminal protein (723 aa).

Positions arginine 453–arginine 462 match the Nuclear localization signal motif. Positions arginine 457–glutamate 492 are disordered. Serine 651 is modified (O-(5'-phospho-DNA)-serine).

Belongs to the adenoviridae terminal protein family. In terms of assembly, heterodimer with the polymerase; this heterodimer binds to bp 9 to 18 of the genome. Interacts with host POU2F1; POU2F1 binds to the auxiliary sequences in the inverted terminal repeats and tethers the pTP-POL heterodimer to the origin DNA thereby participating in the assembly of the pre-initiation complex (POL-TP-DBP-NFIA-POU2F1). In terms of processing, preterminal protein is used to replicate viral genome, upon genomic encapsidation it is processed first into iTP and finally into TP by adenovirus protease.

The protein resides in the host nucleus matrix. Its function is as follows. Protein covalently bound to the viral DNA that acts as a primer for viral genomic replication by DNA strand displacement. Assembles on the viral origin of replication in an initiation complex with viral polymerase, DBP, host NFIA and host POU2F1/OCT1. During initiation, the polymerase covalently couples the first dCTP with Ser-580 of pTP. The terminal protein stimulates the template activity over 20 fold compared to protein-free templates. Neo-synthesized viral genomes are linked to two preterminal proteins, one for each 5' end. These new genomes are encapsidated in the nucleus, and during capsid maturation by viral protease, preterminal protein is first cleaved into intermediary (iTP), then into mature TP. May play a role in host nuclear matrix localization of genomic DNA. This chain is Preterminal protein, found in Canis lupus familiaris (Dog).